A 182-amino-acid polypeptide reads, in one-letter code: Ribulose bisphosphate carboxylase small subunit, chloroplastic 5 (182 aa).

The N-terminal 49 residues, 1-49 (MASSLMSNAATTMAAATTTAQANMVAPFNGLKSISAFPVTRKNNDITSV), are a transit peptide targeting the chloroplast.

The protein belongs to the RuBisCO small chain family. In terms of assembly, heterohexadecamer of 8 large and 8 small subunits.

Its subcellular location is the plastid. The protein localises to the chloroplast. RuBisCO catalyzes two reactions: the carboxylation of D-ribulose 1,5-bisphosphate, the primary event in carbon dioxide fixation, as well as the oxidative fragmentation of the pentose substrate. Both reactions occur simultaneously and in competition at the same active site. Although the small subunit is not catalytic it is essential for maximal activity. The polypeptide is Ribulose bisphosphate carboxylase small subunit, chloroplastic 5 (Mesembryanthemum crystallinum (Common ice plant)).